Here is a 395-residue protein sequence, read N- to C-terminus: Chaperone protein DnaJ (395 aa).

The region spanning 5-70 (DFYEVLGVDK…NKRAAYDRMG (66 aa)) is the J domain. The segment at 145 to 223 (GKDETIKVPT…CDGVGRVRKT (79 aa)) adopts a CR-type zinc-finger fold. Positions 158, 161, 175, 178, 197, 200, 211, and 214 each coordinate Zn(2+). 4 CXXCXGXG motif repeats span residues 158 to 165 (CERCDGQG), 175 to 182 (CGTCQGAG), 197 to 204 (CPQCGGRG), and 211 to 218 (CNDCDGVG).

This sequence belongs to the DnaJ family. As to quaternary structure, homodimer. Zn(2+) serves as cofactor.

Its subcellular location is the cytoplasm. Its function is as follows. Participates actively in the response to hyperosmotic and heat shock by preventing the aggregation of stress-denatured proteins and by disaggregating proteins, also in an autonomous, DnaK-independent fashion. Unfolded proteins bind initially to DnaJ; upon interaction with the DnaJ-bound protein, DnaK hydrolyzes its bound ATP, resulting in the formation of a stable complex. GrpE releases ADP from DnaK; ATP binding to DnaK triggers the release of the substrate protein, thus completing the reaction cycle. Several rounds of ATP-dependent interactions between DnaJ, DnaK and GrpE are required for fully efficient folding. Also involved, together with DnaK and GrpE, in the DNA replication of plasmids through activation of initiation proteins. This chain is Chaperone protein DnaJ, found in Maricaulis maris (strain MCS10) (Caulobacter maris).